The chain runs to 519 residues: Probable U3 small nucleolar RNA-associated protein 18 (519 aa).

WD repeat units lie at residues 26-66 (DKEN…MFDT), 71-111 (GAKD…RLMI), 216-254 (SHSG…NPLV), 259-298 (LRSS…VQKV), 306-345 (NFQP…FATS), 347-386 (KIEG…VVRR), 390-429 (QDGV…ADAA), 438-479 (NITF…VFRN), and 485-519 (TPLG…AHYD).

The protein belongs to the WD repeat UTP18 family. Component of the ribosomal small subunit (SSU) processome.

Its subcellular location is the nucleus. The protein resides in the nucleolus. Its function is as follows. Involved in nucleolar processing of pre-18S ribosomal RNA. The protein is Probable U3 small nucleolar RNA-associated protein 18 of Schizosaccharomyces pombe (strain 972 / ATCC 24843) (Fission yeast).